The sequence spans 314 residues: Curved DNA-binding protein (314 aa).

The J domain maps to 5 to 69 (DYYKILDVEP…EKRAEYDELR (65 aa)). The segment at 73 to 92 (RQGRPFQTPPGWQSRAGAGA) is disordered.

The protein resides in the cytoplasm. It localises to the nucleoid. Its function is as follows. DNA-binding protein that preferentially recognizes a curved DNA sequence. It is probably a functional analog of DnaJ; displays overlapping activities with DnaJ, but functions under different conditions, probably acting as a molecular chaperone in an adaptive response to environmental stresses other than heat shock. Lacks autonomous chaperone activity; binds native substrates and targets them for recognition by DnaK. Its activity is inhibited by the binding of CbpM. This Pseudomonas syringae pv. tomato (strain ATCC BAA-871 / DC3000) protein is Curved DNA-binding protein.